Here is a 393-residue protein sequence, read N- to C-terminus: Putative odorant receptor 69a, isoform A (393 aa).

At 1–39 the chain is on the cytoplasmic side; the sequence is MQLHDHMKYIDLGCKMACIPRYQWKGRPTERQFYASEQR. Residues 40–60 traverse the membrane as a helical segment; sequence IVFLLGTICQIFQITGVLIYW. Residues 61 to 76 are Extracellular-facing; it reads YCNGRLATETGTFVAQ. A helical membrane pass occupies residues 77-97; sequence LSEMCSSFCLTFVGFCNVYAI. Residues 98–139 are Cytoplasmic-facing; that stretch reads STNRNQIETLLEELHQIYPRYRKNHYRCQHYFDMAMTIMRIE. The helical transmembrane segment at 140–160 threads the bilayer; the sequence is FLFYMILYVYYNSAPLWVLLW. Residues 161-189 are Extracellular-facing; sequence EHLHEEYDLSFKTQTNTWFPWKVHGSALG. The chain crosses the membrane as a helical span at residues 190-210; the sequence is FGMAVLSITVGSFVGVGFSIV. Over 211 to 269 the chain is Cytoplasmic; that stretch reads TQNLICLLTFQLKLHYDGISSQLVSLDCRRPGAHKELSILIAHHSRILQLGDQVNDIMN. The helical transmembrane segment at 270–290 threads the bilayer; the sequence is FVFGSSLVGATIAICMSSVSI. The Extracellular segment spans residues 291-304; sequence MLLDLASAFKYASG. A helical transmembrane segment spans residues 305–325; that stretch reads LVAFVLYNFVICYMGTEVTLA. The Cytoplasmic portion of the chain corresponds to 326–365; it reads SGKVLPAAFYNNWYEGDLVYRRMLLILMMRATKPYMWKTY. The helical transmembrane segment at 366–386 threads the bilayer; that stretch reads KLAPVSITTYMATLKFSYQMF. The Extracellular segment spans residues 387 to 393; it reads TCVRSLK.

It belongs to the insect chemoreceptor superfamily. Heteromeric odorant receptor channel (TC 1.A.69) family. Or49a subfamily. Interacts with Orco. Complexes exist early in the endomembrane system in olfactory sensory neurons (OSNs), coupling these complexes to the conserved ciliary trafficking pathway. In terms of tissue distribution, expressed in olfactory sensory neurons in the antenna.

The protein resides in the cell membrane. In terms of biological role, odorant receptor which mediates acceptance or avoidance behavior, depending on its substrates. The odorant receptor repertoire encodes a large collection of odor stimuli that vary widely in identity, intensity, and duration. May form a complex with Orco to form odorant-sensing units, providing sensitive and prolonged odorant signaling and calcium permeability. In Drosophila melanogaster (Fruit fly), this protein is Putative odorant receptor 69a, isoform A (Or69a).